The sequence spans 222 residues: Putative O-methyltransferase MAP_2558 (222 aa).

S-adenosyl-L-methionine-binding positions include Val49, Glu71, 73-74 (GT), Ser79, Asp97, and Ile98. Substrate is bound at residue Asp145. Asp147 serves as a coordination point for S-adenosyl-L-methionine.

It belongs to the class I-like SAM-binding methyltransferase superfamily. Cation-dependent O-methyltransferase family.

The sequence is that of Putative O-methyltransferase MAP_2558 from Mycolicibacterium paratuberculosis (strain ATCC BAA-968 / K-10) (Mycobacterium paratuberculosis).